The following is a 721-amino-acid chain: Leucine-rich repeat flightless-interacting protein 2 (721 aa).

A DVL3-binding region spans residues 1–370 (MGTPASGRKR…YMQGLKELKE (370 aa)). Position 18 is a phosphoserine (S18). The stretch at 22–49 (EALSNIAREAEARLAAKRAARAEARDIR) forms a coiled coil. Phosphoserine occurs at positions 96, 101, 168, 173, 190, and 202. Disordered stretches follow at residues 232 to 262 (SARS…ESVV) and 295 to 338 (KSDK…IDPD). Polar residues-rich tracts occupy residues 237–251 (PGFT…VSSD) and 305–338 (TRPS…IDPD). Phosphoserine occurs at positions 309, 312, 320, 324, and 328. A Phosphothreonine modification is found at T331. S332 and S333 each carry phosphoserine. Coiled-coil stretches lie at residues 349 to 524 (DLKD…GEKH) and 566 to 714 (LDVR…KANR).

Belongs to the LRRFIP family. Interacts (via N-terminus) with DVL3. Interacts with FLII. Weakly interacts with MYD88 in resting cells. Following LPS-stimulation, the interaction with MYD88 is rapidly enhanced; the complex gradually dissociates to basal levels after 6 hours of stimulation. Interaction with MYD88 is regulated by LPS-induced phosphorylation at Ser-202. In the presence of LPS, competes with FLII for MYD88-binding. Post-translationally, ser-190 and Ser-202 are phosphorylated in response to LPS stimulation. Ser-202 phosphorylation regulates the LPS-induced interaction with MYD88. Widely expressed, with highest levels in heart and skeletal muscle.

May function as activator of the canonical Wnt signaling pathway, in association with DVL3, upstream of CTNNB1/beta-catenin. Positively regulates Toll-like receptor (TLR) signaling in response to agonist probably by competing with the negative FLII regulator for MYD88-binding. The sequence is that of Leucine-rich repeat flightless-interacting protein 2 (LRRFIP2) from Homo sapiens (Human).